A 340-amino-acid chain; its full sequence is Anthranilate phosphoribosyltransferase (340 aa).

Residues G82, 85–86, T90, 92–95, 110–118, and A122 contribute to the 5-phospho-alpha-D-ribose 1-diphosphate site; these read GD, NISS, and KHGGRSVSS. An anthranilate-binding site is contributed by G82. Mg(2+) is bound at residue S94. R168 contacts anthranilate. Mg(2+)-binding residues include D227 and E228.

The protein belongs to the anthranilate phosphoribosyltransferase family. As to quaternary structure, homodimer. The cofactor is Mg(2+).

The catalysed reaction is N-(5-phospho-beta-D-ribosyl)anthranilate + diphosphate = 5-phospho-alpha-D-ribose 1-diphosphate + anthranilate. The protein operates within amino-acid biosynthesis; L-tryptophan biosynthesis; L-tryptophan from chorismate: step 2/5. Functionally, catalyzes the transfer of the phosphoribosyl group of 5-phosphorylribose-1-pyrophosphate (PRPP) to anthranilate to yield N-(5'-phosphoribosyl)-anthranilate (PRA). This is Anthranilate phosphoribosyltransferase from Dechloromonas aromatica (strain RCB).